The chain runs to 701 residues: Polyribonucleotide nucleotidyltransferase (701 aa).

Residues aspartate 485 and aspartate 491 each coordinate Mg(2+). The 60-residue stretch at 552–611 (PKIFKTTVDPEKIRDIIGPGGKMINKIIAKTNVKIDIEPDGRIFVAAPDDISGNRAISMI) folds into the KH domain. Positions 621-689 (GQFFLGKVTR…RLGRIALSRK (69 aa)) constitute an S1 motif domain.

It belongs to the polyribonucleotide nucleotidyltransferase family. It depends on Mg(2+) as a cofactor.

The protein localises to the cytoplasm. The catalysed reaction is RNA(n+1) + phosphate = RNA(n) + a ribonucleoside 5'-diphosphate. Involved in mRNA degradation. Catalyzes the phosphorolysis of single-stranded polyribonucleotides processively in the 3'- to 5'-direction. The chain is Polyribonucleotide nucleotidyltransferase from Caldicellulosiruptor saccharolyticus (strain ATCC 43494 / DSM 8903 / Tp8T 6331).